The sequence spans 353 residues: MTAILERREATSRWAQFCNWITSTENRLYIGWFGVIMIPCLLTATSVFIIAFIAAPPVDIDGIREPVSGSLLYGNNIISGAVIPTSNAIGLHFYPIWEAASLDEWLYNGGPYQLIVCHFLLGVACYMGREWELSFRLGMRPWIAVAYSAPVAAATAVFLIYPIGQGSFSDGMPLGISGTFNFMIVFQAEHNILMHPFHMLGVAGVFGGSLFSAMHGSLVTSSLIRETTENESANAGYKFGQEEETYNIVAAHGYFGRLIFQYASFNNSRSLHFFLAAWPVVGIWFTALGLSTMAFNLNGLNFNQSVVDSQGRVINTWADIINRANLGMEVMHERNAHNFPLDLASVEAPSVNA.

At Thr2 the chain carries N-acetylthreonine. Residue Thr2 is modified to Phosphothreonine. A run of 3 helical transmembrane segments spans residues 29-46 (YIGWFGVIMIPCLLTATS), 118-133 (HFLLGVACYMGREWEL), and 142-156 (WIAVAYSAPVAAATA). A chlorophyll a-binding site is contributed by His118. Tyr126 serves as a coordination point for pheophytin a. Residues Asp170 and Glu189 each coordinate [CaMn4O5] cluster. Residues 197-218 (FHMLGVAGVFGGSLFSAMHGSL) traverse the membrane as a helical segment. His198 is a binding site for chlorophyll a. Residues His215 and 264–265 (SF) each bind a quinone. His215 contributes to the Fe cation binding site. His272 lines the Fe cation pocket. The chain crosses the membrane as a helical span at residues 274 to 288 (FLAAWPVVGIWFTAL). [CaMn4O5] cluster contacts are provided by His332, Glu333, Asp342, and Ala344. A propeptide spanning residues 345 to 353 (SVEAPSVNA) is cleaved from the precursor.

This sequence belongs to the reaction center PufL/M/PsbA/D family. As to quaternary structure, PSII is composed of 1 copy each of membrane proteins PsbA, PsbB, PsbC, PsbD, PsbE, PsbF, PsbH, PsbI, PsbJ, PsbK, PsbL, PsbM, PsbT, PsbX, PsbY, PsbZ, Psb30/Ycf12, at least 3 peripheral proteins of the oxygen-evolving complex and a large number of cofactors. It forms dimeric complexes. The D1/D2 heterodimer binds P680, chlorophylls that are the primary electron donor of PSII, and subsequent electron acceptors. It shares a non-heme iron and each subunit binds pheophytin, quinone, additional chlorophylls, carotenoids and lipids. D1 provides most of the ligands for the Mn4-Ca-O5 cluster of the oxygen-evolving complex (OEC). There is also a Cl(-1) ion associated with D1 and D2, which is required for oxygen evolution. The PSII complex binds additional chlorophylls, carotenoids and specific lipids. is required as a cofactor. Post-translationally, tyr-161 forms a radical intermediate that is referred to as redox-active TyrZ, YZ or Y-Z. In terms of processing, C-terminally processed by CTPA; processing is essential to allow assembly of the oxygen-evolving complex and thus photosynthetic growth.

It localises to the plastid. The protein resides in the chloroplast thylakoid membrane. The catalysed reaction is 2 a plastoquinone + 4 hnu + 2 H2O = 2 a plastoquinol + O2. Its function is as follows. Photosystem II (PSII) is a light-driven water:plastoquinone oxidoreductase that uses light energy to abstract electrons from H(2)O, generating O(2) and a proton gradient subsequently used for ATP formation. It consists of a core antenna complex that captures photons, and an electron transfer chain that converts photonic excitation into a charge separation. The D1/D2 (PsbA/PsbD) reaction center heterodimer binds P680, the primary electron donor of PSII as well as several subsequent electron acceptors. The protein is Photosystem II protein D1 of Oltmannsiellopsis viridis (Marine flagellate).